The primary structure comprises 173 residues: Inorganic pyrophosphatase (173 aa).

The substrate site is built by lysine 29, arginine 43, and tyrosine 55. Residues aspartate 65, aspartate 70, and aspartate 102 each coordinate Mg(2+). Substrate is bound at residue tyrosine 141.

Belongs to the PPase family. In terms of assembly, homohexamer. It depends on Mg(2+) as a cofactor.

The protein resides in the cytoplasm. The enzyme catalyses diphosphate + H2O = 2 phosphate + H(+). Functionally, catalyzes the hydrolysis of inorganic pyrophosphate (PPi) forming two phosphate ions. The protein is Inorganic pyrophosphatase of Gluconobacter oxydans (strain 621H) (Gluconobacter suboxydans).